The sequence spans 222 residues: UPF0502 protein PBPRB0676 (222 aa).

This sequence belongs to the UPF0502 family.

In Photobacterium profundum (strain SS9), this protein is UPF0502 protein PBPRB0676.